A 134-amino-acid chain; its full sequence is uncharacterized protein (134 aa).

This is an uncharacterized protein from Ictaluridae (bullhead catfishes).